The chain runs to 434 residues: GTPase Obg (434 aa).

The 158-residue stretch at 1 to 158 (MFLDTAKIKV…RELQLELKIL (158 aa)) folds into the Obg domain. An OBG-type G domain is found at 159–336 (ADVGLVGFPS…LLDATAELLD (178 aa)). GTP is bound by residues 165-172 (GFPSVGKS), 190-194 (FTTIV), 212-215 (DLPG), 282-285 (NKMD), and 317-319 (SGL). Mg(2+) contacts are provided by serine 172 and threonine 192. Residues 356–434 (GFDEEEKAFE…IGKFEFEFVD (79 aa)) enclose the OCT domain.

Belongs to the TRAFAC class OBG-HflX-like GTPase superfamily. OBG GTPase family. In terms of assembly, monomer. Requires Mg(2+) as cofactor.

The protein resides in the cytoplasm. Its function is as follows. An essential GTPase which binds GTP, GDP and possibly (p)ppGpp with moderate affinity, with high nucleotide exchange rates and a fairly low GTP hydrolysis rate. Plays a role in control of the cell cycle, stress response, ribosome biogenesis and in those bacteria that undergo differentiation, in morphogenesis control. The polypeptide is GTPase Obg (Streptococcus pneumoniae (strain Hungary19A-6)).